Consider the following 1086-residue polypeptide: Fused isobutyryl-CoA mutase (1086 aa).

A B12-binding domain is found at 10-140 (HVRFVTASSL…QGMINVMLEE (131 aa)). Histidine 23 lines the adenosylcob(III)alamin pocket. Residues 153–407 (LERLPSGDVQ…FVALVDTINK (255 aa)) are GTPase chaperone MeaI. A GTP-binding site is contributed by 210–215 (GAGKSS). Serine 214, valine 238, aspartate 239, and aspartate 252 together coordinate Mg(2+). Arginine 255 lines the GTP pocket. Mg(2+)-binding residues include glutamate 300 and threonine 301. Residue 347–350 (NKFE) coordinates GTP. The tract at residues 408–570 (KAGTNWKTSL…YKENVPGSFP (163 aa)) is linker. Phenylalanine 578, arginine 613, arginine 719, tyrosine 763, serine 812, arginine 847, and lysine 852 together coordinate substrate. GTP contacts are provided by glutamate 964 and asparagine 1085.

Belongs to the IcmF family. Homodimer. It depends on adenosylcob(III)alamin as a cofactor. The cofactor is Mg(2+).

The enzyme catalyses 2-methylpropanoyl-CoA = butanoyl-CoA. It carries out the reaction 3-methylbutanoyl-CoA = 2,2-dimethylpropanoyl-CoA. It catalyses the reaction GTP + H2O = GDP + phosphate + H(+). Its function is as follows. Catalyzes the reversible interconversion of isobutyryl-CoA and n-butyryl-CoA, and to a lesser extent, of pivalyl-CoA and isovaleryl-CoA, using radical chemistry. Also exhibits GTPase activity, associated with its G-protein domain (MeaI) that functions as a chaperone that assists cofactor delivery and proper holo-enzyme assembly. Also displays ATPase activity. Is not able to convert 3-hydroxybutyryl-CoA to 2-hydroxyisobutyryl-CoA. Does not exhibit methylmalonyl-CoA mutase (MCM) activity. The chain is Fused isobutyryl-CoA mutase from Geobacillus kaustophilus (strain HTA426).